The primary structure comprises 92 residues: Small ribosomal subunit protein uS19 (92 aa).

This sequence belongs to the universal ribosomal protein uS19 family.

Its function is as follows. Protein S19 forms a complex with S13 that binds strongly to the 16S ribosomal RNA. This Corynebacterium diphtheriae (strain ATCC 700971 / NCTC 13129 / Biotype gravis) protein is Small ribosomal subunit protein uS19.